Consider the following 160-residue polypeptide: Eukaryotic translation initiation factor 5A-1/2 (160 aa).

Residues 1 to 12 are compositionally biased toward basic and acidic residues; sequence MSDEEHHFESKA. The disordered stretch occupies residues 1–21; sequence MSDEEHHFESKADAGASKTYP. Lysine 52 carries the hypusine modification.

It belongs to the eIF-5A family. Post-translationally, lys-52 undergoes hypusination, a unique post-translational modification that consists in the addition of a butylamino group from spermidine to lysine side chain, leading to the formation of the unusual amino acid hypusine. eIF-5As are the only known proteins to undergo this modification, which is essential for their function.

Its function is as follows. Translation factor that promotes translation elongation and termination, particularly upon ribosome stalling at specific amino acid sequence contexts. Binds between the exit (E) and peptidyl (P) site of the ribosome and promotes rescue of stalled ribosome: specifically required for efficient translation of polyproline-containing peptides as well as other motifs that stall the ribosome. Acts as a ribosome quality control (RQC) cofactor by joining the RQC complex to facilitate peptidyl transfer during CAT tailing step. This chain is Eukaryotic translation initiation factor 5A-1/2 (EIF5A1), found in Solanum tuberosum (Potato).